An 84-amino-acid chain; its full sequence is Small ribosomal subunit protein uS17 (84 aa).

The protein belongs to the universal ribosomal protein uS17 family. In terms of assembly, part of the 30S ribosomal subunit.

Its function is as follows. One of the primary rRNA binding proteins, it binds specifically to the 5'-end of 16S ribosomal RNA. In Histophilus somni (strain 129Pt) (Haemophilus somnus), this protein is Small ribosomal subunit protein uS17.